The primary structure comprises 176 residues: Probable DNA-directed RNA polymerase subunit delta (176 aa).

The 68-residue stretch at 14–81 folds into the HTH HARE-type domain; that stretch reads KSFIDMAYTL…GENLWGLRDW (68 aa). The disordered stretch occupies residues 114–176; that stretch reads LGEDEMDDDD…DFEDEEDFKA (63 aa). Acidic residues-rich tracts occupy residues 116-145 and 153-176; these read EDEMDDDDDIPAQTDDQEELNDPEDEQVEE and VIEEDEDELDEDEEDFEDEEDFKA.

The protein belongs to the RpoE family. In terms of assembly, RNAP is composed of a core of 2 alpha, a beta and a beta' subunits. The core is associated with a delta subunit and one of several sigma factors.

Participates in both the initiation and recycling phases of transcription. In the presence of the delta subunit, RNAP displays an increased specificity of transcription, a decreased affinity for nucleic acids, and an increased efficiency of RNA synthesis because of enhanced recycling. This Staphylococcus aureus (strain bovine RF122 / ET3-1) protein is Probable DNA-directed RNA polymerase subunit delta.